The following is a 238-amino-acid chain: Ephrin-A3 (238 aa).

Positions 1–22 (MAAAPLLLLLLLVPVPLLPLLA) are cleaved as a signal peptide. The 140-residue stretch at 30-169 (GNRHAVYWNS…RMKVFVCCAS (140 aa)) folds into the Ephrin RBD domain. N-linked (GlcNAc...) asparagine glycans are attached at residues asparagine 38, asparagine 67, and asparagine 100. Intrachain disulfides connect cysteine 63–cysteine 110 and cysteine 99–cysteine 158. Residue glycine 214 is the site of GPI-anchor amidated glycine attachment. Positions 215–238 (TSPKREHLPLAVGIAFFLMTFLAS) are cleaved as a propeptide — removed in mature form.

Belongs to the ephrin family. Interacts with EPHA8; activates EPHA8. In terms of tissue distribution, expressed in brain, skeletal muscle, spleen, thymus, prostate, testis, ovary, small intestine, and peripheral blood leukocytes.

It localises to the cell membrane. Cell surface GPI-bound ligand for Eph receptors, a family of receptor tyrosine kinases which are crucial for migration, repulsion and adhesion during neuronal, vascular and epithelial development. Binds promiscuously Eph receptors residing on adjacent cells, leading to contact-dependent bidirectional signaling into neighboring cells. The signaling pathway downstream of the receptor is referred to as forward signaling while the signaling pathway downstream of the ephrin ligand is referred to as reverse signaling. This Homo sapiens (Human) protein is Ephrin-A3 (EFNA3).